The chain runs to 238 residues: 7-cyano-7-deazaguanine synthase (238 aa).

An ATP-binding site is contributed by 10 to 20 (LSGGLDSSTVL). Residues Cys-190, Cys-198, Cys-201, and Cys-204 each coordinate Zn(2+).

The protein belongs to the QueC family. The cofactor is Zn(2+).

The catalysed reaction is 7-carboxy-7-deazaguanine + NH4(+) + ATP = 7-cyano-7-deazaguanine + ADP + phosphate + H2O + H(+). Its pathway is purine metabolism; 7-cyano-7-deazaguanine biosynthesis. Catalyzes the ATP-dependent conversion of 7-carboxy-7-deazaguanine (CDG) to 7-cyano-7-deazaguanine (preQ(0)). This Thermoplasma acidophilum (strain ATCC 25905 / DSM 1728 / JCM 9062 / NBRC 15155 / AMRC-C165) protein is 7-cyano-7-deazaguanine synthase.